Consider the following 1149-residue polypeptide: ATP-dependent helicase/deoxyribonuclease subunit B (1149 aa).

Residue 8–15 (GRAGTGKT) coordinates ATP. [4Fe-4S] cluster is bound by residues C784, C1102, C1105, and C1111.

This sequence belongs to the helicase family. AddB/RexB type 1 subfamily. As to quaternary structure, heterodimer of AddA and AddB. Requires Mg(2+) as cofactor. [4Fe-4S] cluster serves as cofactor.

Functionally, the heterodimer acts as both an ATP-dependent DNA helicase and an ATP-dependent, dual-direction single-stranded exonuclease. Recognizes the chi site generating a DNA molecule suitable for the initiation of homologous recombination. The AddB subunit has 5' -&gt; 3' nuclease activity but not helicase activity. This is ATP-dependent helicase/deoxyribonuclease subunit B from Thermoanaerobacter pseudethanolicus (strain ATCC 33223 / 39E) (Clostridium thermohydrosulfuricum).